We begin with the raw amino-acid sequence, 730 residues long: Stonin-1 (730 aa).

Disordered regions lie at residues 1 to 26 (MYST…KRKD), 38 to 83 (NGLK…PLST), and 132 to 159 (SPHV…AGPQ). 2 stretches are compositionally biased toward low complexity: residues 54 to 65 (PSSASSTPLSSP) and 132 to 143 (SPHVSLPSSHSH). Residues 269-402 (GWSFMLRIPE…KLPATAKPKN (134 aa)) form the SHD domain. In terms of domain architecture, MHD spans 407-710 (EQEICLDIQD…ACYNIQVEIE (304 aa)).

This sequence belongs to the Stoned B family.

The protein resides in the cytoplasm. It localises to the membrane. In terms of biological role, may be involved in the endocytic machinery. This is Stonin-1 (Ston1) from Mus musculus (Mouse).